Consider the following 429-residue polypeptide: UDP-N-acetylglucosamine 1-carboxyvinyltransferase (429 aa).

22 to 23 contacts phosphoenolpyruvate; it reads KN. R102 is a UDP-N-acetyl-alpha-D-glucosamine binding site. C126 functions as the Proton donor in the catalytic mechanism. C126 is subject to 2-(S-cysteinyl)pyruvic acid O-phosphothioketal. UDP-N-acetyl-alpha-D-glucosamine is bound by residues 131–135, D316, and I338; that span reads RPVDL.

This sequence belongs to the EPSP synthase family. MurA subfamily.

It localises to the cytoplasm. The catalysed reaction is phosphoenolpyruvate + UDP-N-acetyl-alpha-D-glucosamine = UDP-N-acetyl-3-O-(1-carboxyvinyl)-alpha-D-glucosamine + phosphate. It participates in cell wall biogenesis; peptidoglycan biosynthesis. Its function is as follows. Cell wall formation. Adds enolpyruvyl to UDP-N-acetylglucosamine. In Methylobacterium radiotolerans (strain ATCC 27329 / DSM 1819 / JCM 2831 / NBRC 15690 / NCIMB 10815 / 0-1), this protein is UDP-N-acetylglucosamine 1-carboxyvinyltransferase.